The following is a 159-amino-acid chain: Ribosomal RNA large subunit methyltransferase H (159 aa).

Leu76 and Gly108 together coordinate S-adenosyl-L-methionine.

This sequence belongs to the RNA methyltransferase RlmH family. Homodimer.

The protein resides in the cytoplasm. It catalyses the reaction pseudouridine(1915) in 23S rRNA + S-adenosyl-L-methionine = N(3)-methylpseudouridine(1915) in 23S rRNA + S-adenosyl-L-homocysteine + H(+). Its function is as follows. Specifically methylates the pseudouridine at position 1915 (m3Psi1915) in 23S rRNA. The sequence is that of Ribosomal RNA large subunit methyltransferase H from Ligilactobacillus salivarius (strain UCC118) (Lactobacillus salivarius).